The chain runs to 337 residues: DNA-directed RNA polymerase subunit alpha (337 aa).

The segment at 1–233 (MVREKVTVST…DLFIPFLHAQ (233 aa)) is alpha N-terminal domain (alpha-NTD). The interval 267–337 (IALKYIFIDQ…FTVDLPKNKF (71 aa)) is alpha C-terminal domain (alpha-CTD).

Belongs to the RNA polymerase alpha chain family. In plastids the minimal PEP RNA polymerase catalytic core is composed of four subunits: alpha, beta, beta', and beta''. When a (nuclear-encoded) sigma factor is associated with the core the holoenzyme is formed, which can initiate transcription.

The protein localises to the plastid. It is found in the chloroplast. It carries out the reaction RNA(n) + a ribonucleoside 5'-triphosphate = RNA(n+1) + diphosphate. DNA-dependent RNA polymerase catalyzes the transcription of DNA into RNA using the four ribonucleoside triphosphates as substrates. This chain is DNA-directed RNA polymerase subunit alpha, found in Platanus occidentalis (Sycamore).